Here is a 258-residue protein sequence, read N- to C-terminus: UPF0246 protein CJA_0191 (258 aa).

It belongs to the UPF0246 family.

This Cellvibrio japonicus (strain Ueda107) (Pseudomonas fluorescens subsp. cellulosa) protein is UPF0246 protein CJA_0191.